Here is a 1520-residue protein sequence, read N- to C-terminus: Putative lipoprotein AcfD homolog (1520 aa).

Residues 1-23 form the signal peptide; sequence MNKKFKYKKSLLAAILSATLLAG. 2 disordered regions span residues 22–107 and 226–247; these read AGCD…GATC and NAAT…TTPG. Residue C24 is the site of N-palmitoyl cysteine attachment. The S-diacylglycerol cysteine moiety is linked to residue C24. Residues 31–42 show a composition bias toward low complexity; the sequence is SSSDTPPVDSGT. The segment covering 51–77 has biased composition (pro residues); that stretch reads DPTPNPEPTPEPTPDPEPTPEPIPDPE. Polar residues predominate over residues 97-107; the sequence is GGSQRVTGATC. Residues 234 to 247 show a composition bias toward low complexity; that stretch reads STHTSPVVPVTTPG. In terms of domain architecture, Peptidase M60 spans 1081-1381; that stretch reads GNMQSTGLWA…MYAQLKEWAE (301 aa). Residues 1498-1520 are disordered; sequence DLPKPEQGPETINQVTEHKMSAE.

It to V.cholerae AcfD (VC_0845).

Its subcellular location is the cell inner membrane. Its function is as follows. Involved in a type II secretion system (T2SS, formerly general secretion pathway, GSP) for the export of folded proteins across the outer membrane. The polypeptide is Putative lipoprotein AcfD homolog (yghJ) (Escherichia coli (strain K12)).